The chain runs to 399 residues: Chalcone synthase 2 (399 aa).

Residue Cys166 is part of the active site.

The protein belongs to the thiolase-like superfamily. Chalcone/stilbene synthases family.

It catalyses the reaction (E)-4-coumaroyl-CoA + 3 malonyl-CoA + 3 H(+) = 2',4,4',6'-tetrahydroxychalcone + 3 CO2 + 4 CoA. Its pathway is secondary metabolite biosynthesis; flavonoid biosynthesis. In terms of biological role, the primary product of this enzyme is 4,2',4',6'-tetrahydroxychalcone (also termed naringenin-chalcone or chalcone) which can under specific conditions spontaneously isomerize into naringenin. Substrate preference is feruloyl-CoA = caffeoyl-CoA &gt;&gt; cinnamoyl-CoA. The sequence is that of Chalcone synthase 2 (CHS2) from Hordeum vulgare (Barley).